We begin with the raw amino-acid sequence, 81 residues long: Beta-toxin Ct13 (81 aa).

The first 18 residues, 1-18 (MKVLILIIASVLLIGVEC), serve as a signal peptide directing secretion. One can recognise an LCN-type CS-alpha/beta domain in the interval 19–78 (KDGFPVDSEGCILLPCATRAYCSVNCKFMKGSGGSCDTLACHCKGLPEDAKVQDKPTNKC). Intrachain disulfides connect C29–C78, C34–C54, C40–C59, and C44–C61. The residue at position 78 (C78) is a Cysteine amide.

This sequence belongs to the long (4 C-C) scorpion toxin superfamily. Sodium channel inhibitor family. Beta subfamily. In terms of tissue distribution, expressed by the venom gland.

It is found in the secreted. Functionally, beta toxins bind voltage-independently at site-4 of sodium channels (Nav) and shift the voltage of activation toward more negative potentials thereby affecting sodium channel activation and promoting spontaneous and repetitive firing. In Centruroides tecomanus (Scorpion), this protein is Beta-toxin Ct13.